Reading from the N-terminus, the 185-residue chain is Large ribosomal subunit protein uL5 (185 aa).

Belongs to the universal ribosomal protein uL5 family. In terms of assembly, part of the 50S ribosomal subunit; part of the 5S rRNA/L5/L18/L25 subcomplex. Contacts the 5S rRNA and the P site tRNA. Forms a bridge to the 30S subunit in the 70S ribosome.

This is one of the proteins that bind and probably mediate the attachment of the 5S RNA into the large ribosomal subunit, where it forms part of the central protuberance. In the 70S ribosome it contacts protein S13 of the 30S subunit (bridge B1b), connecting the 2 subunits; this bridge is implicated in subunit movement. Contacts the P site tRNA; the 5S rRNA and some of its associated proteins might help stabilize positioning of ribosome-bound tRNAs. This is Large ribosomal subunit protein uL5 from Treponema pallidum (strain Nichols).